The primary structure comprises 1194 residues: Rho-associated protein kinase let-502 (1194 aa).

The 263-residue stretch at Phe-68–Phe-330 folds into the Protein kinase domain. Residues Ile-74–Val-82 and Lys-97 each bind ATP. Catalysis depends on Asp-190, which acts as the Proton acceptor. Residues Lys-331 to Leu-402 enclose the AGC-kinase C-terminal domain. 2 coiled-coil regions span residues Glu-436–Arg-844 and Gly-875–Gln-933. The 63-residue stretch at Glu-784–Pro-846 folds into the RhoBD domain. Residues Ile-961–Ser-1171 enclose the PH domain. The Phorbol-ester/DAG-type zinc finger occupies Arg-1085–Cys-1138.

This sequence belongs to the protein kinase superfamily. AGC Ser/Thr protein kinase family. Interacts with rho-1. Requires Mg(2+) as cofactor.

The protein resides in the cytoplasm. The protein localises to the cytoskeleton. It is found in the cleavage furrow. It carries out the reaction L-seryl-[protein] + ATP = O-phospho-L-seryl-[protein] + ADP + H(+). It catalyses the reaction L-threonyl-[protein] + ATP = O-phospho-L-threonyl-[protein] + ADP + H(+). With respect to regulation, activated by rho-1 binding. In terms of biological role, negatively regulates mel-11 to relieve the inhibition of mlc-4, allowing contraction of the circumferentially oriented microfilaments in epidermal cells and thereby regulating myosin II contractility during spermathecal contraction, cleavage furrow contraction in early embryos, and embryonic elongation and morphogenesis. Required for P-cell migration. May also play a role in oocyte cellularization. This Caenorhabditis briggsae protein is Rho-associated protein kinase let-502.